The chain runs to 310 residues: uncharacterized protein (310 aa).

The protein belongs to the YiaX1 family.

This is an uncharacterized protein from Salmonella typhimurium (strain LT2 / SGSC1412 / ATCC 700720).